Here is a 93-residue protein sequence, read N- to C-terminus: Chaperone NapD (93 aa).

The protein belongs to the NapD family. In terms of assembly, interacts with the cytoplasmic NapA precursor.

The protein resides in the cytoplasm. Its function is as follows. Chaperone for NapA, the catalytic subunit of the periplasmic nitrate reductase. It binds directly and specifically to the twin-arginine signal peptide of NapA, preventing premature interaction with the Tat translocase and premature export. The chain is Chaperone NapD from Haemophilus influenzae (strain ATCC 51907 / DSM 11121 / KW20 / Rd).